The following is a 380-amino-acid chain: Kappa-type opioid receptor (380 aa).

Over 1 to 57 (MGRRRQGPAQPASELPARNACLLPNGSAWLPGWAEPDGNGSAGPQDEQLEPAHISPA) the chain is Extracellular. 2 N-linked (GlcNAc...) asparagine glycosylation sites follow: asparagine 25 and asparagine 39. A helical membrane pass occupies residues 58-85 (IPVIITAVYSVVFVVGLVGNSLVMFVII). Residues 86-95 (RYTKMKTATN) are Cytoplasmic-facing. A helical transmembrane segment spans residues 96–119 (IYIFNLALADALVTTTMPFQSTVY). The Extracellular segment spans residues 120 to 132 (LMNSWPFGDVLCK). Cysteine 131 and cysteine 210 are joined by a disulfide. Residues 133 to 154 (IVISIDYYNMFTSIFTLTMMSV) traverse the membrane as a helical segment. The Cytoplasmic portion of the chain corresponds to 155–173 (DRYIAVCHPVKALDFRTPL). Residues 174–196 (KAKIINICIWLLSSSVGISAIIL) form a helical membrane-spanning segment. At 197–222 (GGTKVREDVDIIECSLQFPDDDYSWW) the chain is on the extracellular side. A helical membrane pass occupies residues 223-247 (DLFMKICVFVFAFVIPVLIIIVCYT). At 248 to 274 (LMILRLKSVRLLSGSREKDRNLRRITR) the chain is on the cytoplasmic side. A helical transmembrane segment spans residues 275 to 296 (LVLVVVAVFIICWTPIHIFILV). Residues 297–311 (EALGSTSHSTAALSS) are Extracellular-facing. The helical transmembrane segment at 312-333 (YYFCIALGYTNSSLNPILYAFL) threads the bilayer. Residues 334–380 (DENFKRCFRDFCFPIKMRMERQSTSRVRNTVQDPAYMRNVDGVNKPV) are Cytoplasmic-facing. Residue cysteine 345 is the site of S-palmitoyl cysteine attachment.

The protein belongs to the G-protein coupled receptor 1 family. Interacts with NHERF1. Interacts with GABARAPL1.

The protein resides in the cell membrane. Functionally, G-protein coupled opioid receptor that functions as a receptor for endogenous alpha-neoendorphins and dynorphins, but has low affinity for beta-endorphins. Also functions as a receptor for various synthetic opioids and for the psychoactive diterpene salvinorin A. Ligand binding causes a conformation change that triggers signaling via guanine nucleotide-binding proteins (G proteins) and modulates the activity of down-stream effectors, such as adenylate cyclase. Signaling leads to the inhibition of adenylate cyclase activity. Inhibits neurotransmitter release by reducing calcium ion currents and increasing potassium ion conductance. Plays a role in the perception of pain. Plays a role in mediating reduced physical activity upon treatment with synthetic opioids. Plays a role in the regulation of salivation in response to synthetic opioids. May play a role in arousal and regulation of autonomic and neuroendocrine functions. The polypeptide is Kappa-type opioid receptor (OPRK1) (Cavia porcellus (Guinea pig)).